The sequence spans 430 residues: Serine--tRNA ligase (430 aa).

231 to 233 (TSE) contacts L-serine. 262 to 264 (RSE) contacts ATP. Position 285 (glutamate 285) interacts with L-serine. 349 to 352 (EISS) contributes to the ATP binding site. Serine 385 provides a ligand contact to L-serine.

This sequence belongs to the class-II aminoacyl-tRNA synthetase family. Type-1 seryl-tRNA synthetase subfamily. In terms of assembly, homodimer. The tRNA molecule binds across the dimer.

Its subcellular location is the cytoplasm. The enzyme catalyses tRNA(Ser) + L-serine + ATP = L-seryl-tRNA(Ser) + AMP + diphosphate + H(+). It carries out the reaction tRNA(Sec) + L-serine + ATP = L-seryl-tRNA(Sec) + AMP + diphosphate + H(+). It functions in the pathway aminoacyl-tRNA biosynthesis; selenocysteinyl-tRNA(Sec) biosynthesis; L-seryl-tRNA(Sec) from L-serine and tRNA(Sec): step 1/1. In terms of biological role, catalyzes the attachment of serine to tRNA(Ser). Is also able to aminoacylate tRNA(Sec) with serine, to form the misacylated tRNA L-seryl-tRNA(Sec), which will be further converted into selenocysteinyl-tRNA(Sec). The protein is Serine--tRNA ligase of Ruegeria pomeroyi (strain ATCC 700808 / DSM 15171 / DSS-3) (Silicibacter pomeroyi).